Reading from the N-terminus, the 95-residue chain is Sec-independent protein translocase protein TatA (95 aa).

The chain crosses the membrane as a helical span at residues 1 to 21 (MFGRLGAPEIILILVVIILLF). Over residues 44–55 (AKAMKSEAKADD) the composition is skewed to basic and acidic residues. The tract at residues 44–95 (AKAMKSEAKADDAAPADPPNPEQSAAQRTIQAAPGDVTSSRPVTEPTDTTKR) is disordered.

It belongs to the TatA/E family. The Tat system comprises two distinct complexes: a TatABC complex, containing multiple copies of TatA, TatB and TatC subunits, and a separate TatA complex, containing only TatA subunits. Substrates initially bind to the TatABC complex, which probably triggers association of the separate TatA complex to form the active translocon.

The protein resides in the cell membrane. Its function is as follows. Part of the twin-arginine translocation (Tat) system that transports large folded proteins containing a characteristic twin-arginine motif in their signal peptide across membranes. TatA could form the protein-conducting channel of the Tat system. The sequence is that of Sec-independent protein translocase protein TatA from Streptomyces coelicolor (strain ATCC BAA-471 / A3(2) / M145).